A 273-amino-acid polypeptide reads, in one-letter code: MKVAIVFDSAGTLVKIMRVIKDLKKNKFICNSQTVDIVDKKKGRALVIIKEDPLKVVDKENPEKLISDLLKEVEIGISYCNPPINREGIFKDRKTKVKELQEPLNILKRYEVETGYGSALIIDTYAGEVEYTIATAGCLFKEVKETIKQLKDLGVKVFIASGDRKGFIKRLAEITGVDERYIMAEAHQELKRDLIRNLKKEGYFTIMVGDGANDVPAMIESDLAVVTLQNGNVSRRALETADIKIYNIKEIVDICKKVINGEIKGRMQIKECS.

The 4-aspartylphosphate intermediate role is filled by D8.

This sequence belongs to the cation transport ATPase (P-type) (TC 3.A.3) family. Type IB subfamily. Mg(2+) is required as a cofactor.

Its activity is regulated as follows. Inhibited by orthovanadate. In terms of biological role, most probably acts as a phosphatase in the cytosol. In Methanocaldococcus jannaschii (strain ATCC 43067 / DSM 2661 / JAL-1 / JCM 10045 / NBRC 100440) (Methanococcus jannaschii), this protein is Soluble P-type ATPase-like phosphatase (patS).